Reading from the N-terminus, the 204-residue chain is MGGKWSKRRAEGWQTIRERMRRAEPAEPAADGVGAVSRDLARHGAITSSNTNNADIAWLEAQEEGEVGFPVRPQVPLRPMTYKAAVDLSHFLKEKGGLEGLVHSQKRQDILDLWVYHTQGFFPDWQNYTPGPGIRYPLTFGWCYKLVPVEPDEGENNREDNSLLHPANQHGVEDSERQVLVWRFDSRLAFHHVARELHPEYFKN.

Positions 1 to 33 (MGGKWSKRRAEGWQTIRERMRRAEPAEPAADGV) are disordered. Residue Gly-2 is the site of N-myristoyl glycine; by host attachment. Position 6 is a phosphoserine; by host (Ser-6). The segment covering 8–25 (RRAEGWQTIRERMRRAEP) has biased composition (basic and acidic residues). The segment at 63 to 66 (EEGE) is acidic; interacts with host PACS1 and PACS2; stabilizes the interaction of NEF/MHC-I with host AP1M1; necessary for MHC-I internalization. The segment at 70 to 79 (PVRPQVPLRP) is SH3-binding; interaction with Src family tyrosine kinases. The PxxP; stabilizes the interaction of NEF/MHC-I with host AP1M1; necessary for MHC-I internalization signature appears at 73 to 76 (PQVP). The tract at residues 109–125 (DILDLWVYHTQGFFPDW) is mediates dimerization, Nef-PTE1 interaction. Residues 149-179 (VEPDEGENNREDNSLLHPANQHGVEDSERQV) are binding to ATP6V1H. The Dileucine internalization motif; necessary for CD4 internalization signature appears at 163 to 164 (LL). Positions 173–174 (ED) match the Diacidic; necessary for CD4 internalization motif.

This sequence belongs to the lentivirus primate group Nef protein family. In terms of assembly, monomer; cytosolic form. Homodimer; membrane bound form. Interacts with Nef associated p21-activated kinase (PAK2); this interaction activates PAK2. Associates with the Nef-MHC-I-AP1 complex; this complex is required for MHC-I internalization. Interacts (via C-terminus) with host PI3-kinase. Interacts with host PACS1; this interaction seems to be weak. Interacts with host PACS2. Interacts with host LCK and MAPK3; these interactions inhibit the kinase activity of the latter. Interacts with host ATP6V1H; this interaction may play a role in CD4 endocytosis. Associates with the CD4-Nef-AP2 complex; this complex is required for CD4 internalization. Interacts with host AP2 subunit alpha and AP2 subunit sigma2. Interacts with TCR-zeta chain; this interaction up-regulates the Fas ligand (FasL) surface expression. Interacts with host HCK, LYN, and SRC; these interactions activate the Src family kinases. Interacts with MAP3K5; this interaction inhibits the Fas and TNFR-mediated death signals. Interacts with beta-COP and PTE1. Interacts with human RACK1; this increases Nef phosphorylation by PKC. Interacts with TP53; this interaction decreases the half-life of TP53, protecting the infected cell against p53-mediated apoptosis. Post-translationally, the virion-associated Nef proteins are cleaved by the viral protease to release the soluble C-terminal core protein. Nef is probably cleaved concomitantly with viral structural proteins on maturation of virus particles. Myristoylated. In terms of processing, phosphorylated on serine residues, probably by host PKCdelta and theta.

It localises to the host cell membrane. It is found in the virion. Its subcellular location is the secreted. The protein resides in the host Golgi apparatus membrane. Its function is as follows. Factor of infectivity and pathogenicity, required for optimal virus replication. Alters numerous pathways of T-lymphocyte function and down-regulates immunity surface molecules in order to evade host defense and increase viral infectivity. Alters the functionality of other immunity cells, like dendritic cells, monocytes/macrophages and NK cells. In infected CD4(+) T-lymphocytes, down-regulates the surface MHC-I, mature MHC-II, CD4, CD28, CCR5 and CXCR4 molecules. Mediates internalization and degradation of host CD4 through the interaction of with the cytoplasmic tail of CD4, the recruitment of AP-2 (clathrin adapter protein complex 2), internalization through clathrin coated pits, and subsequent transport to endosomes and lysosomes for degradation. Diverts host MHC-I molecules to the trans-Golgi network-associated endosomal compartments by an endocytic pathway to finally target them for degradation. MHC-I down-regulation may involve AP-1 (clathrin adapter protein complex 1) or possibly Src family kinase-ZAP70/Syk-PI3K cascade recruited by PACS2. In consequence infected cells are masked for immune recognition by cytotoxic T-lymphocytes. Decreasing the number of immune receptors also prevents reinfection by more HIV particles (superinfection). Down-regulates host SERINC3 and SERINC5 thereby excluding these proteins from the viral particles. Virion infectivity is drastically higher when SERINC3 or SERINC5 are excluded from the viral envelope, because these host antiviral proteins impair the membrane fusion event necessary for subsequent virion penetration. Functionally, bypasses host T-cell signaling by inducing a transcriptional program nearly identical to that of anti-CD3 cell activation. Interaction with TCR-zeta chain up-regulates the Fas ligand (FasL). Increasing surface FasL molecules and decreasing surface MHC-I molecules on infected CD4(+) cells send attacking cytotoxic CD8+ T-lymphocytes into apoptosis. In terms of biological role, plays a role in optimizing the host cell environment for viral replication without causing cell death by apoptosis. Protects the infected cells from apoptosis in order to keep them alive until the next virus generation is ready to strike. Inhibits the Fas and TNFR-mediated death signals by blocking MAP3K5/ASK1. Decreases the half-life of TP53, protecting the infected cell against p53-mediated apoptosis. Inhibits the apoptotic signals regulated by the Bcl-2 family proteins through the formation of a Nef/PI3-kinase/PAK2 complex that leads to activation of PAK2 and induces phosphorylation of host BAD. Its function is as follows. Extracellular Nef protein targets CD4(+) T-lymphocytes for apoptosis by interacting with CXCR4 surface receptors. This is Protein Nef from Human immunodeficiency virus type 1 group M subtype B (strain 89.6) (HIV-1).